A 205-amino-acid chain; its full sequence is Octanoyltransferase (205 aa).

One can recognise a BPL/LPL catalytic domain in the interval 30 to 205 (NSADELVWLL…ILKKEFYKIF (176 aa)). Substrate contacts are provided by residues 68–75 (RGGKHTYH), 140–142 (AFG), and 153–155 (GIA). C171 (acyl-thioester intermediate) is an active-site residue.

This sequence belongs to the LipB family.

The protein resides in the cytoplasm. The enzyme catalyses octanoyl-[ACP] + L-lysyl-[protein] = N(6)-octanoyl-L-lysyl-[protein] + holo-[ACP] + H(+). Its pathway is protein modification; protein lipoylation via endogenous pathway; protein N(6)-(lipoyl)lysine from octanoyl-[acyl-carrier-protein]: step 1/2. Its function is as follows. Catalyzes the transfer of endogenously produced octanoic acid from octanoyl-acyl-carrier-protein onto the lipoyl domains of lipoate-dependent enzymes. Lipoyl-ACP can also act as a substrate although octanoyl-ACP is likely to be the physiological substrate. The chain is Octanoyltransferase from Wolbachia pipientis wMel.